Here is a 469-residue protein sequence, read N- to C-terminus: Probable Xaa-Pro aminopeptidase PEPP (469 aa).

Positions 264, 275, 398, and 438 each coordinate Mn(2+).

It belongs to the peptidase M24B family. Mn(2+) serves as cofactor.

The enzyme catalyses Release of any N-terminal amino acid, including proline, that is linked to proline, even from a dipeptide or tripeptide.. Catalyzes the removal of a penultimate prolyl residue from the N-termini of peptides. The polypeptide is Probable Xaa-Pro aminopeptidase PEPP (PEPP) (Ajellomyces capsulatus (strain G186AR / H82 / ATCC MYA-2454 / RMSCC 2432) (Darling's disease fungus)).